Consider the following 160-residue polypeptide: Large ribosomal subunit protein uL22c (160 aa).

It belongs to the universal ribosomal protein uL22 family. In terms of assembly, part of the 50S ribosomal subunit.

The protein resides in the plastid. Its subcellular location is the chloroplast. Its function is as follows. This protein binds specifically to 23S rRNA. In terms of biological role, the globular domain of the protein is located near the polypeptide exit tunnel on the outside of the subunit, while an extended beta-hairpin is found that lines the wall of the exit tunnel in the center of the 70S ribosome. The chain is Large ribosomal subunit protein uL22c (rpl22) from Draba nemorosa (Woodland whitlowgrass).